Consider the following 23-residue polypeptide: Aurein-4.2 (23 aa).

The protein belongs to the frog skin active peptide (FSAP) family. Aurein subfamily. In terms of tissue distribution, expressed by the skin dorsal glands.

The protein localises to the secreted. Its function is as follows. Has no antimicrobial or anticancer activity. This is Aurein-4.2 from Ranoidea aurea (Green and golden bell frog).